Consider the following 266-residue polypeptide: MPKGKKAKGKKVAPAPSVAKKHEVKKVVNPLFEKRPKNFGIGQDIQPKRDLTRFVKWPRYVRLQRHGSILYKRLKVPPAINQFNQALDRQTATQLFKLAHKYRPETKQEKKRRLLARAEQKAAGKGDVPTKRPPVVRAGVNTVTSLVESKKAQLVVIAHDVDPIELVLFLPALCRKMGVPYCIVKGKARLGRLVHRKTCTSVCFTQTNPEDRAALAKLVEAIKTNYNDRYEEIRRHWGGNIMGPKSTARIAKLEKAKGKELATKLG.

Positions 1 to 11 are enriched in basic residues; it reads MPKGKKAKGKK. Residues 1 to 21 form a disordered region; sequence MPKGKKAKGKKVAPAPSVAKK.

The protein belongs to the eukaryotic ribosomal protein eL8 family. In terms of assembly, component of the large ribosomal subunit.

Its subcellular location is the cytoplasm. Functionally, component of the large ribosomal subunit. The ribosome is a large ribonucleoprotein complex responsible for the synthesis of proteins in the cell. The sequence is that of Large ribosomal subunit protein eL8 (rpl7a) from Ictalurus punctatus (Channel catfish).